The chain runs to 60 residues: Cytochrome c oxidase subunit 7, mitochondrial (60 aa).

Topologically, residues 2 to 29 (ANKVIQLQKIFQSSTKPLWWRHPRSALY) are mitochondrial matrix. The helical transmembrane segment at 30-53 (LYPFYAIFAVAVVTPLLYIPNAIR) threads the bilayer. The Mitochondrial intermembrane segment spans residues 54-60 (GIKAKKA).

This sequence belongs to the cytochrome c oxidase VIIa family. As to quaternary structure, component of the cytochrome c oxidase (complex IV, CIV), a multisubunit enzyme composed of 12 subunits. The complex is composed of a catalytic core of 3 subunits COX1, COX2 and COX3, encoded in the mitochondrial DNA, and 9 supernumerary subunits COX4, COX5A (or COX5B), COX6, COX7, COX8, COX9, COX12, COX13 and COX26, which are encoded in the nuclear genome. The complex exists as a monomer or a dimer and forms supercomplexes (SCs) in the inner mitochondrial membrane with a dimer of ubiquinol-cytochrome c oxidoreductase (cytochrome b-c1 complex, complex III, CIII), resulting in 2 different assemblies (supercomplexes III(2)IV and III(2)IV(2)).

The protein resides in the mitochondrion inner membrane. Its pathway is energy metabolism; oxidative phosphorylation. In terms of biological role, component of the cytochrome c oxidase, the last enzyme in the mitochondrial electron transport chain which drives oxidative phosphorylation. The respiratory chain contains 3 multisubunit complexes succinate dehydrogenase (complex II, CII), ubiquinol-cytochrome c oxidoreductase (cytochrome b-c1 complex, complex III, CIII) and cytochrome c oxidase (complex IV, CIV), that cooperate to transfer electrons derived from NADH and succinate to molecular oxygen, creating an electrochemical gradient over the inner membrane that drives transmembrane transport and the ATP synthase. Cytochrome c oxidase is the component of the respiratory chain that catalyzes the reduction of oxygen to water. Electrons originating from reduced cytochrome c in the intermembrane space (IMS) are transferred via the dinuclear copper A center (CU(A)) of COX2 and heme A of COX1 to the active site in COX1, a binuclear center (BNC) formed by heme A3 and copper B (CU(B)). The BNC reduces molecular oxygen to 2 water molecules using 4 electrons from cytochrome c in the IMS and 4 protons from the mitochondrial matrix. The polypeptide is Cytochrome c oxidase subunit 7, mitochondrial (COX7) (Saccharomyces cerevisiae (strain ATCC 204508 / S288c) (Baker's yeast)).